Reading from the N-terminus, the 257-residue chain is ABC transporter ATP-binding protein YxdL (257 aa).

One can recognise an ABC transporter domain in the interval 5-243 (LEVKHINKTY…FYEQILDVLS (239 aa)). 40-47 (GPSGSGKT) serves as a coordination point for ATP.

The protein belongs to the ABC transporter superfamily. The complex is composed of two ATP-binding proteins (YxdL) and two transmembrane proteins (YxdM).

In terms of biological role, part of the ABC transporter complex YxdLM which could be involved in peptide resistance. Responsible for energy coupling to the transport system. In Bacillus subtilis (strain 168), this protein is ABC transporter ATP-binding protein YxdL (yxdL).